A 109-amino-acid chain; its full sequence is Small ribosomal subunit protein uS17 (109 aa).

The protein belongs to the universal ribosomal protein uS17 family. As to quaternary structure, part of the 30S ribosomal subunit.

Its function is as follows. One of the primary rRNA binding proteins, it binds specifically to the 5'-end of 16S ribosomal RNA. This chain is Small ribosomal subunit protein uS17, found in Halobacterium salinarum (strain ATCC 29341 / DSM 671 / R1).